The primary structure comprises 303 residues: UDP-N-acetylenolpyruvoylglucosamine reductase (303 aa).

An FAD-binding PCMH-type domain is found at 27-191 (VGGPAARLYK…ISAKLQLTPG (165 aa)). R171 is an active-site residue. S220 functions as the Proton donor in the catalytic mechanism. Residue E291 is part of the active site.

Belongs to the MurB family. FAD is required as a cofactor.

It localises to the cytoplasm. It carries out the reaction UDP-N-acetyl-alpha-D-muramate + NADP(+) = UDP-N-acetyl-3-O-(1-carboxyvinyl)-alpha-D-glucosamine + NADPH + H(+). It functions in the pathway cell wall biogenesis; peptidoglycan biosynthesis. Its function is as follows. Cell wall formation. This is UDP-N-acetylenolpyruvoylglucosamine reductase from Legionella pneumophila (strain Paris).